The sequence spans 396 residues: S-adenosylmethionine synthase (396 aa).

H14 provides a ligand contact to ATP. Residue D16 participates in Mg(2+) binding. Residue E42 coordinates K(+). L-methionine contacts are provided by E55 and Q98. Residues 98 to 108 are flexible loop; that stretch reads QSPDIALGVNE. ATP-binding positions include 174 to 176, 241 to 242, D250, 256 to 257, A273, and K277; these read DGK, RF, and RK. D250 provides a ligand contact to L-methionine. K281 contributes to the L-methionine binding site.

It belongs to the AdoMet synthase family. As to quaternary structure, homotetramer; dimer of dimers. The cofactor is Mg(2+). It depends on K(+) as a cofactor.

The protein localises to the cytoplasm. The catalysed reaction is L-methionine + ATP + H2O = S-adenosyl-L-methionine + phosphate + diphosphate. The protein operates within amino-acid biosynthesis; S-adenosyl-L-methionine biosynthesis; S-adenosyl-L-methionine from L-methionine: step 1/1. Catalyzes the formation of S-adenosylmethionine (AdoMet) from methionine and ATP. The overall synthetic reaction is composed of two sequential steps, AdoMet formation and the subsequent tripolyphosphate hydrolysis which occurs prior to release of AdoMet from the enzyme. This Fervidobacterium nodosum (strain ATCC 35602 / DSM 5306 / Rt17-B1) protein is S-adenosylmethionine synthase.